A 201-amino-acid polypeptide reads, in one-letter code: MSLAPKMSKAFIGKPAPQFKTQAVVDGEFVDVSLSDYKGKYVVLFFYPLDFTFVCPTEIIAFSDRAEEFKAINTVVLAASTDSVFSHLAWINQPRKHGGLGEMNIPVLADTNHQISRDYGVLKEDEGIAFRGLFIIDPSQNLRQITINDLPVGRSVDETLRLVQAFQFVEKHGEVCPAGWTPGSDTIKPGVKESQEYFKKH.

Positions 10 to 168 constitute a Thioredoxin domain; that stretch reads AFIGKPAPQF…TLRLVQAFQF (159 aa). C55 (cysteine sulfenic acid (-SOH) intermediate) is an active-site residue.

This sequence belongs to the peroxiredoxin family. AhpC/Prx1 subfamily. As to quaternary structure, monomer and homodimer; disulfide-linked. Under nonstress conditions, present in the reduced monomeric form. Forms active hyperoxidized monomers and disulfide-linked homodimers upon oxidation by hydrogen peroxide. Forms active oxidized homodimers in response to the drug metformin. In terms of processing, the enzyme can be inactivated by further oxidation of the cysteine sulfenic acid (C(P)-SOH) to sulphinic acid (C(P)-SO2H) instead of its condensation to a disulfide bond. In terms of tissue distribution, expressed in the gonad, neurons and intestine (at protein level). Expressed in the pharyngeal inter-neuron I4 and the sensory interneuron I2. Expressed in the intestine, pharyngeal muscle 1, vulval muscle, body wall muscle, epithelial cells e1 and e3, and neurons in the head and tail.

The protein localises to the cytoplasm. The catalysed reaction is a hydroperoxide + [thioredoxin]-dithiol = an alcohol + [thioredoxin]-disulfide + H2O. With respect to regulation, activated following oxidation of the conserved redox-active cysteine residue, which subsequently allows for the oxidation and activation of substrates. In terms of biological role, thiol-specific peroxidase that catalyzes the reduction of hydrogen peroxide and organic hydroperoxides to water and alcohols, respectively. In I2 pharyngeal neurons, required for the inhibition of feeding in response to light and hydrogen peroxide. In the intestine, plays a role in protecting cells against oxidative stress by detoxifying peroxides such as hydrogen peroxide. In addition, plays a role in the recovery from oxidative stress induced by hydrogen peroxide. In its hyperoxidized form (induced by hydrogen peroxide), confers protection against heat stress. However, has a low tendency for overoxidation during the normal lifespan. Increases sensitivity to cytotoxicity caused by metalloids and heavy metals such as arsenic and cadmium by playing a role in inhibiting the expression of phase II detoxification genes such as gcs-1 in intestinal cells. In addition, in response to arsenite, promotes the secretion of the insulin ligand daf-28 into the pseudocoelom, which negatively regulates the activities of daf-16 and skn-1. Plays a role in promoting longevity. Plays a role in the mitohormetic pathway by promoting the activation of pmk-1 in response to the drug metformin. This is Peroxiredoxin prdx-2 from Caenorhabditis elegans.